The chain runs to 229 residues: ATP-dependent Clp protease proteolytic subunit 1 (229 aa).

Serine 129 functions as the Nucleophile in the catalytic mechanism. The active site involves histidine 154.

Belongs to the peptidase S14 family. As to quaternary structure, fourteen ClpP subunits assemble into 2 heptameric rings which stack back to back to give a disk-like structure with a central cavity, resembling the structure of eukaryotic proteasomes.

It is found in the cytoplasm. It carries out the reaction Hydrolysis of proteins to small peptides in the presence of ATP and magnesium. alpha-casein is the usual test substrate. In the absence of ATP, only oligopeptides shorter than five residues are hydrolyzed (such as succinyl-Leu-Tyr-|-NHMec, and Leu-Tyr-Leu-|-Tyr-Trp, in which cleavage of the -Tyr-|-Leu- and -Tyr-|-Trp bonds also occurs).. Cleaves peptides in various proteins in a process that requires ATP hydrolysis. Has a chymotrypsin-like activity. Plays a major role in the degradation of misfolded proteins. The protein is ATP-dependent Clp protease proteolytic subunit 1 of Thermosynechococcus vestitus (strain NIES-2133 / IAM M-273 / BP-1).